The primary structure comprises 308 residues: MPTLSFWVCSATPVSPGFFALILLVFVTSIASNVVKIILIHIDSRLHTPMYFLLSQLSLRDILYISTIVPKMLVDQVMSQRAISFAGCTAQHFLYLTLAGAEFFLLGLMSCDRYVAICNPLHYPDLMSRKICWLIVAAAWLGGSIDGFLLTPVTMQFPFCASREINHFFCEVPALLKLSCTDTSAYETAMYVCCIMMLLIPFSVISGSYTRILITVYRMSEAEGRRKAVATCSSHMVVVSLFYGAAMYTYVLPHSYHTPEQDKAVSAFYTILTPMLNPLIYSLRNKDVTGALQKVVGRCVSSGKVTTF.

At 1–17 (MPTLSFWVCSATPVSPG) the chain is on the extracellular side. A helical transmembrane segment spans residues 18 to 40 (FFALILLVFVTSIASNVVKIILI). Over 41–51 (HIDSRLHTPMY) the chain is Cytoplasmic. A helical membrane pass occupies residues 52-74 (FLLSQLSLRDILYISTIVPKMLV). Residues 75-88 (DQVMSQRAISFAGC) are Extracellular-facing. An intrachain disulfide couples cysteine 88 to cysteine 170. The chain crosses the membrane as a helical span at residues 89–109 (TAQHFLYLTLAGAEFFLLGLM). At 110–130 (SCDRYVAICNPLHYPDLMSRK) the chain is on the cytoplasmic side. The chain crosses the membrane as a helical span at residues 131–151 (ICWLIVAAAWLGGSIDGFLLT). Over 152-188 (PVTMQFPFCASREINHFFCEVPALLKLSCTDTSAYET) the chain is Extracellular. The chain crosses the membrane as a helical span at residues 189–209 (AMYVCCIMMLLIPFSVISGSY). Residues 210 to 235 (TRILITVYRMSEAEGRRKAVATCSSH) lie on the Cytoplasmic side of the membrane. The helical transmembrane segment at 236 to 256 (MVVVSLFYGAAMYTYVLPHSY) threads the bilayer. The Extracellular segment spans residues 257–262 (HTPEQD). Residues 263–283 (KAVSAFYTILTPMLNPLIYSL) form a helical membrane-spanning segment. At 284–308 (RNKDVTGALQKVVGRCVSSGKVTTF) the chain is on the cytoplasmic side.

The protein belongs to the G-protein coupled receptor 1 family.

The protein localises to the cell membrane. Its function is as follows. Odorant receptor. This chain is Olfactory receptor 2T7 (OR2T7), found in Homo sapiens (Human).